The chain runs to 711 residues: Acyl-CoA dehydrogenase FadE34 (711 aa).

This sequence belongs to the acyl-CoA dehydrogenase family. In terms of assembly, homodimer. It depends on FAD as a cofactor.

The catalysed reaction is 3-oxochol-4-en-24-oyl-CoA + A = (22E)-3-oxochola-4,22-dien-24-oyl-CoA + AH2. It carries out the reaction 3beta-hydroxy-chol-5-ene-24-oyl-CoA + A = 3beta-hydroxy-chol-5,22-dien-24-oyl-CoA + AH2. Its pathway is steroid metabolism; cholesterol degradation. Its function is as follows. Involved in the second cycle of side chain dehydrogenation in the beta-oxidation of cholesterol catabolism. It contributes partly to the virulence by increasing the efficiency of beta-oxidation. Catalyzes the dehydrogenation of the five-carbon steroid side chain of 3-oxo-chol-4-en-24-oyl-CoA (3-OCO-CoA) to yield 3-oxochol-4,22-dien-24-oyl-CoA. Can also use 3beta-hydroxy-chol-5-ene-24-oyl-CoA, and shows weak activity with cholyl-CoA and deoxycholyl-CoA. The sequence is that of Acyl-CoA dehydrogenase FadE34 (fadE34) from Mycobacterium tuberculosis (strain ATCC 25618 / H37Rv).